The sequence spans 619 residues: Dihydroxy-acid dehydratase (619 aa).

Asp81 serves as a coordination point for Mg(2+). Residue Cys122 participates in [2Fe-2S] cluster binding. Mg(2+) contacts are provided by Asp123 and Lys124. Lys124 is modified (N6-carboxylysine). Cys195 contacts [2Fe-2S] cluster. Glu494 contributes to the Mg(2+) binding site. Residue Ser520 is the Proton acceptor of the active site.

Belongs to the IlvD/Edd family. In terms of assembly, homodimer. It depends on [2Fe-2S] cluster as a cofactor. Requires Mg(2+) as cofactor.

The catalysed reaction is (2R)-2,3-dihydroxy-3-methylbutanoate = 3-methyl-2-oxobutanoate + H2O. It carries out the reaction (2R,3R)-2,3-dihydroxy-3-methylpentanoate = (S)-3-methyl-2-oxopentanoate + H2O. It functions in the pathway amino-acid biosynthesis; L-isoleucine biosynthesis; L-isoleucine from 2-oxobutanoate: step 3/4. It participates in amino-acid biosynthesis; L-valine biosynthesis; L-valine from pyruvate: step 3/4. Functionally, functions in the biosynthesis of branched-chain amino acids. Catalyzes the dehydration of (2R,3R)-2,3-dihydroxy-3-methylpentanoate (2,3-dihydroxy-3-methylvalerate) into 2-oxo-3-methylpentanoate (2-oxo-3-methylvalerate) and of (2R)-2,3-dihydroxy-3-methylbutanoate (2,3-dihydroxyisovalerate) into 2-oxo-3-methylbutanoate (2-oxoisovalerate), the penultimate precursor to L-isoleucine and L-valine, respectively. This is Dihydroxy-acid dehydratase from Shewanella sp. (strain MR-4).